The chain runs to 336 residues: MAFNLRNRNFLKLLDFTPREIQHMLELAAELKKAKYNGYEQPRLKGKNIALIFEKASTRTRCAFEVAAYDQGANVTYLGPSGSQIGYKESMKDTARVLGRMYDGIEYRGFGQEIVETLGAHAGVPVWNGLTDEFHPTQILADFLTMQEHARGKQLSEVTFAYLGDARNNMGNSLMVGAAKMGMDIRLVAPKAFWPEEELVAQCREIAEETGAKITVTEDVQEGVEGCDFLYTDVWVSMGEAKEAWAERISLMMPYQVNMAMLKATGNPHVKFMHCLPAFHGEDTVVGKELAQEYPELKDGVEVTDEVVESKHSIVFDEAENRLHTIKAIMVATLGQ.

Carbamoyl phosphate contacts are provided by residues 57-60 (STRT), Gln-84, Arg-108, and 135-138 (HPTQ). Residues Asn-169, Asp-233, and 237 to 238 (SM) contribute to the L-ornithine site. Carbamoyl phosphate is bound by residues 275–276 (CL) and Arg-322.

The protein belongs to the aspartate/ornithine carbamoyltransferase superfamily. OTCase family.

The protein localises to the cytoplasm. It carries out the reaction carbamoyl phosphate + L-ornithine = L-citrulline + phosphate + H(+). It participates in amino-acid degradation; L-arginine degradation via ADI pathway; carbamoyl phosphate from L-arginine: step 2/2. Its function is as follows. Reversibly catalyzes the transfer of the carbamoyl group from carbamoyl phosphate (CP) to the N(epsilon) atom of ornithine (ORN) to produce L-citrulline. This Photobacterium profundum (strain SS9) protein is Ornithine carbamoyltransferase, catabolic.